A 395-amino-acid chain; its full sequence is Multidrug resistance protein MdtL (395 aa).

Residues 1–3 lie on the Cytoplasmic side of the membrane; it reads MKR. The helical transmembrane segment at 4-24 threads the bilayer; it reads FLLCSFALVLLYPAGIDMYLV. Residues 25 to 41 are Periplasmic-facing; that stretch reads GLPRIAADLNASEAQLH. Residues 42–62 traverse the membrane as a helical segment; it reads IAFSVYLAGMATAMLFAGKIA. The Cytoplasmic portion of the chain corresponds to 63–68; that stretch reads DQSGRK. A helical transmembrane segment spans residues 69-89; sequence PVAIVGAIVFMMASLLCSRAS. Topologically, residues 90–92 are periplasmic; it reads EGS. A helical membrane pass occupies residues 93 to 113; the sequence is LFLSGRFLQGVGAGGCYVVAF. Residues 114-130 are Cytoplasmic-facing; the sequence is AILRDTLDEHRRAKVLS. Residues 131–151 traverse the membrane as a helical segment; that stretch reads LLNGITCIVPVLAPVMGHLIM. Residues 152-157 are Periplasmic-facing; the sequence is LRFPWQ. A helical membrane pass occupies residues 158 to 178; the sequence is SLFYTMSTMGIMVGLLSLFIL. The Cytoplasmic portion of the chain corresponds to 179-216; sequence RETRPARLAPRDLSPSSSAAESLVNRFFVSRLAITTLS. A helical transmembrane segment spans residues 217–237; that stretch reads VSVILTFVNASPVLLMEVMGF. Residues 238 to 246 lie on the Periplasmic side of the membrane; sequence SRGDYAITM. The helical transmembrane segment at 247–267 threads the bilayer; sequence ALTAGVSMVVSFSTPFALGLF. Residues 268–270 lie on the Cytoplasmic side of the membrane; sequence KPR. A helical membrane pass occupies residues 271–291; that stretch reads TLMLVSQGLFLTAGVTLSLAH. The Periplasmic portion of the chain corresponds to 292-294; that stretch reads TNT. A helical transmembrane segment spans residues 295-315; that stretch reads VTLFGLTLICAGFSVGFGVAM. Over 316 to 332 the chain is Cytoplasmic; it reads SQALGPFSLRAGVASST. Residues 333–353 form a helical membrane-spanning segment; the sequence is LGIAQVCGSSLWIWLAAILGI. At 354-357 the chain is on the periplasmic side; the sequence is SAMN. Residues 358 to 378 traverse the membrane as a helical segment; sequence MLIGILIGCSIVSILLIFSVA. Residues 379-395 lie on the Cytoplasmic side of the membrane; sequence PNRSVAEHEEIPYQSRS.

The protein belongs to the major facilitator superfamily. DHA1 family. MdtL (TC 2.A.1.2.22) subfamily.

Its subcellular location is the cell inner membrane. The chain is Multidrug resistance protein MdtL (mdtL) from Salmonella typhi.